We begin with the raw amino-acid sequence, 530 residues long: C2H2-type transcription factor MSN2 (530 aa).

2 C2H2-type zinc fingers span residues 409 to 432 (FVCD…RSLH) and 438 to 460 (FECN…ARTH).

Its subcellular location is the nucleus. The protein resides in the cytoplasm. Its function is as follows. Transcription factor that acts as a key downstream transcription factor in the HOG1-MAPK pathway. Plays crucial roles in the regulation of conidiation, virulence and multi-stress responses. In addition to regulating the expression of genes specifically involved in stress-response, conidiation and virulence, controls also expression of cellular signaling factors. In Metarhizium robertsii (strain ARSEF 23 / ATCC MYA-3075) (Metarhizium anisopliae (strain ARSEF 23)), this protein is C2H2-type transcription factor MSN2.